Here is a 97-residue protein sequence, read N- to C-terminus: Aspartyl/glutamyl-tRNA(Asn/Gln) amidotransferase subunit C (97 aa).

Belongs to the GatC family. In terms of assembly, heterotrimer of A, B and C subunits.

It catalyses the reaction L-glutamyl-tRNA(Gln) + L-glutamine + ATP + H2O = L-glutaminyl-tRNA(Gln) + L-glutamate + ADP + phosphate + H(+). The catalysed reaction is L-aspartyl-tRNA(Asn) + L-glutamine + ATP + H2O = L-asparaginyl-tRNA(Asn) + L-glutamate + ADP + phosphate + 2 H(+). In terms of biological role, allows the formation of correctly charged Asn-tRNA(Asn) or Gln-tRNA(Gln) through the transamidation of misacylated Asp-tRNA(Asn) or Glu-tRNA(Gln) in organisms which lack either or both of asparaginyl-tRNA or glutaminyl-tRNA synthetases. The reaction takes place in the presence of glutamine and ATP through an activated phospho-Asp-tRNA(Asn) or phospho-Glu-tRNA(Gln). This is Aspartyl/glutamyl-tRNA(Asn/Gln) amidotransferase subunit C from Synechococcus sp. (strain CC9605).